We begin with the raw amino-acid sequence, 537 residues long: 2-succinyl-5-enolpyruvyl-6-hydroxy-3-cyclohexene-1-carboxylate synthase (537 aa).

The protein belongs to the TPP enzyme family. MenD subfamily. As to quaternary structure, homodimer. Requires Mg(2+) as cofactor. Mn(2+) is required as a cofactor. The cofactor is thiamine diphosphate.

It carries out the reaction isochorismate + 2-oxoglutarate + H(+) = 5-enolpyruvoyl-6-hydroxy-2-succinyl-cyclohex-3-ene-1-carboxylate + CO2. The protein operates within quinol/quinone metabolism; 1,4-dihydroxy-2-naphthoate biosynthesis; 1,4-dihydroxy-2-naphthoate from chorismate: step 2/7. It participates in quinol/quinone metabolism; menaquinone biosynthesis. Catalyzes the thiamine diphosphate-dependent decarboxylation of 2-oxoglutarate and the subsequent addition of the resulting succinic semialdehyde-thiamine pyrophosphate anion to isochorismate to yield 2-succinyl-5-enolpyruvyl-6-hydroxy-3-cyclohexene-1-carboxylate (SEPHCHC). In Nocardioides sp. (strain ATCC BAA-499 / JS614), this protein is 2-succinyl-5-enolpyruvyl-6-hydroxy-3-cyclohexene-1-carboxylate synthase.